We begin with the raw amino-acid sequence, 377 residues long: DNA methyltransferase CcrM (377 aa).

The region spanning 271–373 (LGKAELTVMT…LRKVIRDQMA (103 aa)) is the RAMA domain.

This sequence belongs to the N(4)/N(6)-methyltransferase family.

It carries out the reaction a 2'-deoxyadenosine in DNA + S-adenosyl-L-methionine = an N(6)-methyl-2'-deoxyadenosine in DNA + S-adenosyl-L-homocysteine + H(+). A beta subtype methylase that recognizes the double-stranded sequence 5'-GANTC-3' and methylates A-2 on both strands. CcrM-mediated methylation has important cellular functions. Contributes to the accurate cell-cycle control of DNA replication and cellular morphology. The sequence is that of DNA methyltransferase CcrM (ccrM) from Brucella anthropi (strain ATCC 49188 / DSM 6882 / CCUG 24695 / JCM 21032 / LMG 3331 / NBRC 15819 / NCTC 12168 / Alc 37) (Ochrobactrum anthropi).